The following is a 231-amino-acid chain: Orotidine 5'-phosphate decarboxylase (231 aa).

Residues aspartate 11, lysine 33, 60–69, threonine 120, arginine 181, glutamine 190, glycine 210, and arginine 211 contribute to the substrate site; that span reads DLKFHDIPNT. Lysine 62 serves as the catalytic Proton donor.

This sequence belongs to the OMP decarboxylase family. Type 1 subfamily. In terms of assembly, homodimer.

The enzyme catalyses orotidine 5'-phosphate + H(+) = UMP + CO2. The protein operates within pyrimidine metabolism; UMP biosynthesis via de novo pathway; UMP from orotate: step 2/2. Catalyzes the decarboxylation of orotidine 5'-monophosphate (OMP) to uridine 5'-monophosphate (UMP). The sequence is that of Orotidine 5'-phosphate decarboxylase from Shewanella oneidensis (strain ATCC 700550 / JCM 31522 / CIP 106686 / LMG 19005 / NCIMB 14063 / MR-1).